Reading from the N-terminus, the 965-residue chain is UvrABC system protein A (965 aa).

Position 32-39 (32-39 (GLSGSGKS)) interacts with ATP. Residues 254 to 281 (CPVCDYSLPELEPRLFSFNAPMGACPAC) form a C4-type zinc finger. 2 consecutive ABC transporter domains span residues 311–588 (WDRR…PRSL) and 608–937 (PNAT…HFLA). 641–648 (GVSGSGKS) provides a ligand contact to ATP. A C4-type zinc finger spans residues 740–766 (CEACEGDGLIKVEMHFLPDVYVPCDIC).

This sequence belongs to the ABC transporter superfamily. UvrA family. Forms a heterotetramer with UvrB during the search for lesions.

It is found in the cytoplasm. Functionally, the UvrABC repair system catalyzes the recognition and processing of DNA lesions. UvrA is an ATPase and a DNA-binding protein. A damage recognition complex composed of 2 UvrA and 2 UvrB subunits scans DNA for abnormalities. When the presence of a lesion has been verified by UvrB, the UvrA molecules dissociate. The polypeptide is UvrABC system protein A (Xylella fastidiosa (strain Temecula1 / ATCC 700964)).